The chain runs to 1356 residues: Spike glycoprotein (1356 aa).

A signal peptide spans 1–18; that stretch reads MKLFLILLVLPLASCFFT. S1 regions lie at residues 16–717 and 19–717; these read FFTC…FYYV and CNSN…FYYV. Over 19-1296 the chain is Virion surface; sequence CNSNANLSML…NRFENYIKWP (1278 aa). N-linked (GlcNAc) asparagine; by host glycosylation is found at Asn35, Asn52, and Asn98. Cys106 and Cys126 form a disulfide bridge. Residue Asn155 is glycosylated (N-linked (GlcNAc) asparagine; by host). A disulfide bridge links Cys175 with Cys181. Asn187 and Asn193 each carry an N-linked (GlcNAc) asparagine; by host glycan. Cys207 and Cys210 form a disulfide bridge. 8 N-linked (GlcNAc) asparagine; by host glycosylation sites follow: Asn240, Asn276, Asn301, Asn330, Asn354, Asn358, Asn403, and Asn426. An intrachain disulfide couples Cys259 to Cys284. An intrachain disulfide couples Cys328 to Cys351. A disulfide bridge connects residues Cys438 and Cys447. Residue Asn486 is glycosylated (N-linked (GlcNAc...) asparagine; by host). Cys497 and Cys500 form a disulfide bridge. Asn506 carries N-linked (GlcNAc) asparagine; by host glycosylation. Residue Asn512 is glycosylated (N-linked (GlcNAc...) asparagine; by host). 2 disulfides stabilise this stretch: Cys516/Cys567 and Cys550/Cys577. The interval 598–728 is interaction with host ANPEP; it reads VTWSEGNSIT…NGGNNCTTAV (131 aa). N-linked (GlcNAc) asparagine; by host glycosylation is found at Asn626, Asn645, Asn666, Asn699, and Asn723. Cys627 and Cys678 form a disulfide bridge. The S2 stretch occupies residues 718-1356; it reads SNGGNNCTTA…YYEFEKVHVQ (639 aa). An intrachain disulfide couples Cys724 to Cys737. N-linked (GlcNAc) asparagine; by host glycans are attached at residues Asn749, Asn762, and Asn768. Disulfide bonds link Cys789/Cys811, Cys794/Cys800, and Cys896/Cys907. A fusion peptide region spans residues 934–954; sequence IGGMVLGGLTSAAAIPFSLAL. Positions 948 to 1067 are heptad repeat 1 (HR1); it reads IPFSLALQAR…QVDRLITGRL (120 aa). Residues 1015-1059 are a coiled coil; that stretch reads QDVVNQQGSALNHLTSQLRHNFQAISNSIQAIYDRLDSIQADQQV. A disulfide bond links Cys1098 and Cys1109. N-linked (GlcNAc) asparagine; by host glycans are attached at residues Asn1111, Asn1196, Asn1201, Asn1218, Asn1242, Asn1247, and Asn1277. The interval 1212-1308 is heptad repeat 2 (HR2); sequence PDYVDVNKTL…VWLIISVVFV (97 aa). Positions 1244–1286 form a coiled coil; the sequence is TYLNLSSELKQLEAKTASLFQTTVELQGLIDQINSTYVDLKLL. A helical transmembrane segment spans residues 1297 to 1316; it reads WWVWLIISVVFVVLLSLLVF. Residues 1317–1356 lie on the Intravirion side of the membrane; it reads CCLSTGCCGCCNCLTSSMRGCCDCGSTKLPYYEFEKVHVQ. The KxHxx signature appears at 1352-1356; it reads KVHVQ.

The protein belongs to the alphacoronaviruses spike protein family. Homotrimer. During virus morphogenesis, found in a complex with M proteins. Interacts with host ACE2. Post-translationally, glycosylated by host with heterogeneous N-linked glycans protruding from the trimer surface. Highly glycosylated by host, occluding many regions across the surface of the protein.

The protein resides in the virion membrane. It localises to the host endoplasmic reticulum-Golgi intermediate compartment membrane. Its function is as follows. S1 region attaches the virion to the cell membrane by interacting with host ACE2, initiating the infection. Binding to the receptor probably induces conformational changes in the S glycoprotein unmasking the fusion peptide and activating membranes fusion. S2 region belongs to the class I viral fusion protein. Under the current model, the protein has at least 3 conformational states: pre-fusion native state, pre-hairpin intermediate state, and post-fusion hairpin state. During viral and target cell membrane fusion, the coiled coil regions (heptad repeats) regions assume a trimer-of-hairpins structure, positioning the fusion peptide in close proximity to the C-terminal region of the ectodomain. The formation of this structure appears to drive apposition and subsequent fusion of viral and target cell membranes. The chain is Spike glycoprotein from Human coronavirus NL63 (HCoV-NL63).